Here is an 81-residue protein sequence, read N- to C-terminus: Toxin MIT1 (81 aa).

Cystine bridges form between Cys7/Cys19, Cys13/Cys31, Cys18/Cys59, Cys41/Cys67, and Cys61/Cys77.

The protein belongs to the AVIT (prokineticin) family. In terms of tissue distribution, expressed by the venom gland.

It is found in the secreted. Its function is as follows. Potent agonist for both PKR1/PROKR1 and PKR2/PROKR2. Potently contracts gastrointestinal (GI) smooth muscle. This is Toxin MIT1 from Dendroaspis polylepis polylepis (Black mamba).